The following is a 112-amino-acid chain: Nitrogen regulatory protein P-II (112 aa).

Y51 is modified (O-UMP-tyrosine).

This sequence belongs to the P(II) protein family. Homotrimer.

Its function is as follows. P-II indirectly controls the transcription of the glutamine synthetase gene (glnA). P-II prevents NR-II-catalyzed conversion of NR-I to NR-I-phosphate, the transcriptional activator of glnA. When P-II is uridylylated to P-II-UMP, these events are reversed. When the ratio of Gln to 2-ketoglutarate decreases, P-II is uridylylated to P-II-UMP, which causes the deadenylation of glutamine synthetase, so activating the enzyme. The polypeptide is Nitrogen regulatory protein P-II (glnB) (Rhodobacter capsulatus (Rhodopseudomonas capsulata)).